Consider the following 171-residue polypeptide: S-ribosylhomocysteine lyase (171 aa).

3 residues coordinate Fe cation: histidine 54, histidine 58, and cysteine 128.

Belongs to the LuxS family. Homodimer. Requires Fe cation as cofactor.

The catalysed reaction is S-(5-deoxy-D-ribos-5-yl)-L-homocysteine = (S)-4,5-dihydroxypentane-2,3-dione + L-homocysteine. Functionally, involved in the synthesis of autoinducer 2 (AI-2) which is secreted by bacteria and is used to communicate both the cell density and the metabolic potential of the environment. The regulation of gene expression in response to changes in cell density is called quorum sensing. Catalyzes the transformation of S-ribosylhomocysteine (RHC) to homocysteine (HC) and 4,5-dihydroxy-2,3-pentadione (DPD). The protein is S-ribosylhomocysteine lyase of Salmonella arizonae (strain ATCC BAA-731 / CDC346-86 / RSK2980).